Reading from the N-terminus, the 657-residue chain is UvrABC system protein B (657 aa).

One can recognise a Helicase ATP-binding domain in the interval 23 to 414; the sequence is KSIKKGNKYQ…KENIFHQIMR (392 aa). Residue 36–43 coordinates ATP; that stretch reads GVTGSGKT. The Beta-hairpin motif lies at 89 to 112; that stretch reads YYDYYQPEAYIPRTDVFIEKDSST. The region spanning 431-593 is the Helicase C-terminal domain; it reads QVEILFDEAK…ITPTSVKRHI (163 aa). The 36-residue stretch at 622–657 folds into the UVR domain; sequence AKLVKELRKQMLEAAKALEFEKAAAIRDEINKLRDL.

This sequence belongs to the UvrB family. As to quaternary structure, forms a heterotetramer with UvrA during the search for lesions. Interacts with UvrC in an incision complex.

It is found in the cytoplasm. In terms of biological role, the UvrABC repair system catalyzes the recognition and processing of DNA lesions. A damage recognition complex composed of 2 UvrA and 2 UvrB subunits scans DNA for abnormalities. Upon binding of the UvrA(2)B(2) complex to a putative damaged site, the DNA wraps around one UvrB monomer. DNA wrap is dependent on ATP binding by UvrB and probably causes local melting of the DNA helix, facilitating insertion of UvrB beta-hairpin between the DNA strands. Then UvrB probes one DNA strand for the presence of a lesion. If a lesion is found the UvrA subunits dissociate and the UvrB-DNA preincision complex is formed. This complex is subsequently bound by UvrC and the second UvrB is released. If no lesion is found, the DNA wraps around the other UvrB subunit that will check the other stand for damage. In Campylobacter jejuni subsp. jejuni serotype O:2 (strain ATCC 700819 / NCTC 11168), this protein is UvrABC system protein B.